A 180-amino-acid polypeptide reads, in one-letter code: Shikimate kinase (180 aa).

14-19 (GAGKSS) contacts ATP. Residue Ser18 coordinates Mg(2+). 3 residues coordinate substrate: Asp36, Arg60, and Gly82. Arg120 is a binding site for ATP. Arg139 is a substrate binding site.

This sequence belongs to the shikimate kinase family. In terms of assembly, monomer. The cofactor is Mg(2+).

Its subcellular location is the cytoplasm. The catalysed reaction is shikimate + ATP = 3-phosphoshikimate + ADP + H(+). The protein operates within metabolic intermediate biosynthesis; chorismate biosynthesis; chorismate from D-erythrose 4-phosphate and phosphoenolpyruvate: step 5/7. In terms of biological role, catalyzes the specific phosphorylation of the 3-hydroxyl group of shikimic acid using ATP as a cosubstrate. This Xylella fastidiosa (strain M12) protein is Shikimate kinase.